Here is an 819-residue protein sequence, read N- to C-terminus: Deubiquitinase MYSM1 (819 aa).

Residues 1–12 show a composition bias toward acidic residues; sequence MEAEEADVDVEG. Residues 1–29 form a disordered region; sequence MEAEEADVDVEGDVAAAAQPGNDESTASV. S107 is modified (phosphoserine). The 52-residue stretch at 113-164 folds into the SANT domain; that stretch reads SHSVKWTVEEKELFEQGLAKFGRRWTKIATLLKSRTVLQVKSYARQYFKNKV. Residue K184 forms a Glycyl lysine isopeptide (Lys-Gly) (interchain with G-Cter in SUMO2) linkage. Phosphoserine is present on S215. Disordered stretches follow at residues 228-247, 260-279, and 318-347; these read ELTSQTSQNSGSHLTLDVPN, QEGPLAKSSGESLQNVKQGE, and LHRGEVREEAKHSPSPEPCERQDSSGNEML. The span at 230-240 shows a compositional bias: polar residues; sequence TSQTSQNSGSH. T233 carries the phosphothreonine modification. Over residues 318–340 the composition is skewed to basic and acidic residues; sequence LHRGEVREEAKHSPSPEPCERQD. A Phosphoserine modification is found at S332. Residues 363-461 enclose the SWIRM domain; sequence LKPPEQEVEI…FGCEQAVYNR (99 aa). The 133-residue stretch at 568-700 folds into the MPN domain; that stretch reads VKVAAEALLI…PLPYSQITCL (133 aa). Residues H647, H649, and D660 each contribute to the Zn(2+) site. Residues 647-660 carry the JAMM motif motif; it reads HSHPAFDPNPSLRD. Positions 765 to 769 match the LXXLL motif motif; the sequence is LQKLL.

It belongs to the peptidase M67A family. MYSM1 subfamily. As to quaternary structure, component of a large chromatin remodeling complex, at least composed of MYSM1, PCAF, RBM10 and KIF11/TRIP5. Binds histones.

Its subcellular location is the nucleus. It localises to the cytoplasm. Its function is as follows. Metalloprotease with deubiquitinase activity that plays important regulator roles in hematopoietic stem cell function, blood cell production and immune response. Participates in the normal programming of B-cell responses to antigen after the maturation process. Within the cytoplasm, plays critical roles in the repression of innate immunity and autoimmunity. Removes 'Lys-63'-linked polyubiquitins from TRAF3 and TRAF6 complexes. Attenuates NOD2-mediated inflammation and tissue injury by promoting 'Lys-63'-linked deubiquitination of RIPK2 component. Suppresses the CGAS-STING1 signaling pathway by cleaving STING1 'Lys-63'-linked ubiquitin chains. In the nucleus, acts as a hematopoietic transcription regulator derepressing a range of genes essential for normal stem cell differentiation including EBF1 and PAX5 in B-cells, ID2 in NK-cell progenitor or FLT3 in dendritic cell precursors. Deubiquitinates monoubiquitinated histone H2A, a specific tag for epigenetic transcriptional repression, leading to dissociation of histone H1 from the nucleosome. The sequence is that of Deubiquitinase MYSM1 (Mysm1) from Mus musculus (Mouse).